A 69-amino-acid polypeptide reads, in one-letter code: uncharacterized protein (69 aa).

As to quaternary structure, interacts with the RNA polymerase core.

This is an uncharacterized protein from Bacillus subtilis (strain 168).